A 327-amino-acid chain; its full sequence is Methionine import ATP-binding protein MetN (327 aa).

Residues 3–239 (VELKNIEKIY…PKHAVTKELL (237 aa)) form the ABC transporter domain. ATP is bound at residue 36-43 (GYSGAGKS).

It belongs to the ABC transporter superfamily. Methionine importer (TC 3.A.1.24) family. As to quaternary structure, the complex is composed of two ATP-binding proteins (MetN), two transmembrane proteins (MetI) and a solute-binding protein (MetQ).

It is found in the cell inner membrane. It catalyses the reaction L-methionine(out) + ATP + H2O = L-methionine(in) + ADP + phosphate + H(+). The catalysed reaction is D-methionine(out) + ATP + H2O = D-methionine(in) + ADP + phosphate + H(+). Part of the ABC transporter complex MetNIQ involved in methionine import. Responsible for energy coupling to the transport system. The chain is Methionine import ATP-binding protein MetN from Helicobacter pylori (strain J99 / ATCC 700824) (Campylobacter pylori J99).